Reading from the N-terminus, the 130-residue chain is Fluoride-specific ion channel FluC (130 aa).

The next 4 helical transmembrane spans lie at 3–23, 39–59, 67–87, and 102–122; these read FVFL…YFVG, GTFS…HLAV, FGIF…SYGL, and ISYV…GWFL. Residues glycine 77 and threonine 80 each coordinate Na(+).

It belongs to the fluoride channel Fluc/FEX (TC 1.A.43) family.

The protein resides in the cell inner membrane. The enzyme catalyses fluoride(in) = fluoride(out). With respect to regulation, na(+) is not transported, but it plays an essential structural role and its presence is essential for fluoride channel function. Functionally, fluoride-specific ion channel. Important for reducing fluoride concentration in the cell, thus reducing its toxicity. The polypeptide is Fluoride-specific ion channel FluC (Helicobacter pylori (strain P12)).